The chain runs to 439 residues: Putative porin QuiX (439 aa).

Positions 1–22 are cleaved as a signal peptide; sequence MRHFFKLGLVSAAVLGSQMTLA.

It belongs to the OprB family.

The protein localises to the cell outer membrane. In terms of biological role, could be involved in the transport of quinate or shikimate. In Acinetobacter baylyi (strain ATCC 33305 / BD413 / ADP1), this protein is Putative porin QuiX (quiX).